The primary structure comprises 350 residues: UDP-N-acetylglucosamine--N-acetylmuramyl-(pentapeptide) pyrophosphoryl-undecaprenol N-acetylglucosamine transferase (350 aa).

UDP-N-acetyl-alpha-D-glucosamine contacts are provided by residues threonine 9–glycine 11, asparagine 123, arginine 159, serine 181, and glutamine 281.

This sequence belongs to the glycosyltransferase 28 family. MurG subfamily.

It localises to the cell inner membrane. The catalysed reaction is di-trans,octa-cis-undecaprenyl diphospho-N-acetyl-alpha-D-muramoyl-L-alanyl-D-glutamyl-meso-2,6-diaminopimeloyl-D-alanyl-D-alanine + UDP-N-acetyl-alpha-D-glucosamine = di-trans,octa-cis-undecaprenyl diphospho-[N-acetyl-alpha-D-glucosaminyl-(1-&gt;4)]-N-acetyl-alpha-D-muramoyl-L-alanyl-D-glutamyl-meso-2,6-diaminopimeloyl-D-alanyl-D-alanine + UDP + H(+). It functions in the pathway cell wall biogenesis; peptidoglycan biosynthesis. Cell wall formation. Catalyzes the transfer of a GlcNAc subunit on undecaprenyl-pyrophosphoryl-MurNAc-pentapeptide (lipid intermediate I) to form undecaprenyl-pyrophosphoryl-MurNAc-(pentapeptide)GlcNAc (lipid intermediate II). The chain is UDP-N-acetylglucosamine--N-acetylmuramyl-(pentapeptide) pyrophosphoryl-undecaprenol N-acetylglucosamine transferase from Helicobacter hepaticus (strain ATCC 51449 / 3B1).